A 392-amino-acid chain; its full sequence is L-rhamnonate dehydratase (392 aa).

Substrate-binding residues include histidine 22 and arginine 48. 3 residues coordinate Mg(2+): aspartate 214, glutamate 240, and glutamate 268. Catalysis depends on histidine 318, which acts as the Proton acceptor. Position 338 (glutamate 338) interacts with substrate.

Belongs to the mandelate racemase/muconate lactonizing enzyme family. RhamD subfamily. As to quaternary structure, homooctamer; tetramer of dimers. The cofactor is Mg(2+).

The catalysed reaction is L-rhamnonate = 2-dehydro-3-deoxy-L-rhamnonate + H2O. Functionally, catalyzes the dehydration of L-rhamnonate to 2-keto-3-deoxy-L-rhamnonate (KDR). The protein is L-rhamnonate dehydratase of Paraburkholderia phytofirmans (strain DSM 17436 / LMG 22146 / PsJN) (Burkholderia phytofirmans).